The following is a 242-amino-acid chain: Small ribosomal subunit protein uS2 (242 aa).

This sequence belongs to the universal ribosomal protein uS2 family.

The chain is Small ribosomal subunit protein uS2 from Vibrio parahaemolyticus serotype O3:K6 (strain RIMD 2210633).